Consider the following 136-residue polypeptide: NADPH-dependent 7-cyano-7-deazaguanine reductase (136 aa).

Cys50 serves as the catalytic Thioimide intermediate. Asp57 (proton donor) is an active-site residue. Residues 72 to 74 (YEL) and 91 to 92 (HE) contribute to the substrate site.

The protein belongs to the GTP cyclohydrolase I family. QueF type 1 subfamily.

The protein localises to the cytoplasm. The catalysed reaction is 7-aminomethyl-7-carbaguanine + 2 NADP(+) = 7-cyano-7-deazaguanine + 2 NADPH + 3 H(+). Its pathway is tRNA modification; tRNA-queuosine biosynthesis. Functionally, catalyzes the NADPH-dependent reduction of 7-cyano-7-deazaguanine (preQ0) to 7-aminomethyl-7-deazaguanine (preQ1). This chain is NADPH-dependent 7-cyano-7-deazaguanine reductase, found in Prochlorococcus marinus (strain AS9601).